The sequence spans 429 residues: Adenylosuccinate synthetase (429 aa).

GTP contacts are provided by residues 15–21 (GDEGKGK) and 43–45 (GHV). Catalysis depends on Asp16, which acts as the Proton acceptor. 2 residues coordinate Mg(2+): Asp16 and Gly43. IMP is bound by residues 16–19 (DEGK), 41–44 (NAGH), Thr131, Arg145, Gln225, Thr240, and Arg304. Catalysis depends on His44, which acts as the Proton donor. 300 to 306 (SNTKRPR) contacts substrate. GTP contacts are provided by residues Arg306, 332-334 (LLD), and 414-416 (SVG).

It belongs to the adenylosuccinate synthetase family. In terms of assembly, homodimer. Mg(2+) is required as a cofactor.

Its subcellular location is the cytoplasm. It carries out the reaction IMP + L-aspartate + GTP = N(6)-(1,2-dicarboxyethyl)-AMP + GDP + phosphate + 2 H(+). Its pathway is purine metabolism; AMP biosynthesis via de novo pathway; AMP from IMP: step 1/2. Functionally, plays an important role in the de novo pathway of purine nucleotide biosynthesis. Catalyzes the first committed step in the biosynthesis of AMP from IMP. The protein is Adenylosuccinate synthetase of Mesoplasma florum (strain ATCC 33453 / NBRC 100688 / NCTC 11704 / L1) (Acholeplasma florum).